The following is a 149-amino-acid chain: SsrA-binding protein (149 aa).

It belongs to the SmpB family.

The protein resides in the cytoplasm. Required for rescue of stalled ribosomes mediated by trans-translation. Binds to transfer-messenger RNA (tmRNA), required for stable association of tmRNA with ribosomes. tmRNA and SmpB together mimic tRNA shape, replacing the anticodon stem-loop with SmpB. tmRNA is encoded by the ssrA gene; the 2 termini fold to resemble tRNA(Ala) and it encodes a 'tag peptide', a short internal open reading frame. During trans-translation Ala-aminoacylated tmRNA acts like a tRNA, entering the A-site of stalled ribosomes, displacing the stalled mRNA. The ribosome then switches to translate the ORF on the tmRNA; the nascent peptide is terminated with the 'tag peptide' encoded by the tmRNA and targeted for degradation. The ribosome is freed to recommence translation, which seems to be the essential function of trans-translation. In Wolbachia sp. subsp. Brugia malayi (strain TRS), this protein is SsrA-binding protein.